We begin with the raw amino-acid sequence, 522 residues long: Leucine-rich repeat transmembrane neuronal protein 1 (522 aa).

The N-terminal stretch at 1 to 34 is a signal peptide; it reads MDFLLLGLCLHWLLRRPSGVVLCLLGACFQMLPA. Residues 35–63 form the LRRNT domain; that stretch reads APSGCPGQCRCEGRLLYCEALNLTEAPHN. Topologically, residues 35 to 427 are extracellular; sequence APSGCPGQCR…HAENAVQIHK (393 aa). Asn56 and Asn63 each carry an N-linked (GlcNAc...) asparagine glycan. 10 LRR repeats span residues 64-87, 89-111, 112-135, 136-159, 161-183, 184-207, 209-231, 233-255, 256-278, and 280-302; these read LSGLLGLSLRYNSLSELRAGQFTG, MQLTWLYLDHNHICSVQGDAFQK, LRRVKELTLSSNQITELANTTFRP, MPNLRSVDLSYNKLQALAPDLFHG, RKLTTLHMRANAIQFVPVRIFQD, CRSLKFLDIGYNQLKSLARNSFAG, FKLTELHLEHNDLIKVNFAHFPR, ISLHSLCLRRNKVAIVVSSLDWV, WNLEKMDLSGNEIEYMEPHVFET, and PYLQTLQLDSNRLTYIEPRILNS. An N-linked (GlcNAc...) asparagine glycan is attached at Asn130. Residues 314–365 enclose the LRRCT domain; that stretch reads NLWDCGRNVCALASWLSNFQGRYDANLQCASPEYAQGEDVLDAVYAFHLCED. N-linked (GlcNAc...) asparagine glycosylation is present at Asn381. A helical transmembrane segment spans residues 428–448; the sequence is VVTGTMALIFSFLIVVLVLYV. Residues 449–522 are Cytoplasmic-facing; it reads SWKCFPASLR…HQQPARECEV (74 aa).

It belongs to the LRRTM family. Expressed predominantly in the nervous system by postmitotic neurons, but also in some non-neuronal tissues. In adult brain expression is most prominent in the forebraain, particularly in the thalamus and in the cortical areas including hippocampus, piriform and posterior cingulate.

Its subcellular location is the cell membrane. The protein localises to the postsynaptic cell membrane. Functionally, exhibits strong synaptogenic activity, restricted to excitatory presynaptic differentiation, acting at both pre- and postsynaptic level. In Mus musculus (Mouse), this protein is Leucine-rich repeat transmembrane neuronal protein 1 (Lrrtm1).